The chain runs to 335 residues: Protein-lysine N-methyltransferase EEF2KMT (335 aa).

Met-1 carries the post-translational modification N-acetylmethionine. S-adenosyl-L-methionine-binding positions include Trp-139, 165 to 167 (GSG), Trp-228, and Ala-247.

Belongs to the class I-like SAM-binding methyltransferase superfamily. EEF2KMT family. In terms of assembly, interacts with FAM86B2 and FAM86C1P.

The protein localises to the cytoplasm. The catalysed reaction is L-lysyl-[protein] + 3 S-adenosyl-L-methionine = N(6),N(6),N(6)-trimethyl-L-lysyl-[protein] + 3 S-adenosyl-L-homocysteine + 3 H(+). Its function is as follows. Catalyzes the trimethylation of eukaryotic elongation factor 2 (EEF2) on 'Lys-525'. The protein is Protein-lysine N-methyltransferase EEF2KMT (Eef2kmt) of Mus musculus (Mouse).